We begin with the raw amino-acid sequence, 522 residues long: Aspartic and glutamic acid-rich protein (522 aa).

The first 16 residues, 1–16, serve as a signal peptide directing secretion; it reads MKVFVYLLVTFSLTNA. 2 stretches are compositionally biased toward basic and acidic residues: residues 72-81 and 93-102; these read YDDFFPKDTS and SRNDDGYDLA. Residues 72–497 form a disordered region; that stretch reads YDDFFPKDTS…KSKDAAQGNI (426 aa). Over residues 109 to 125 the composition is skewed to acidic residues; sequence DDEEAYDDFDEVDDRAD. Residues 142-152 show a composition bias toward basic and acidic residues; that stretch reads KLPAEEESKND. Composition is skewed to acidic residues over residues 153–166, 173–200, 228–261, and 267–283; these read MDEETFEDEPEEDK, FAEDERADEREDDDADFDFNDEEDEDEV, DNEEEYADESDDEAEEDSEETADDFEDDPEDESD, and EVEDESEENYQDDTEEG. Residues 284 to 343 are compositionally biased toward basic and acidic residues; it reads SEIKQNDETEEQPEKKFDADKEHEDAPEPLKEKLSDESKARAEDESDKSEDAAKEIKEPE. Residues 319–465 are a coiled coil; it reads DESKARAEDE…KSNLALKRDE (147 aa). Over residues 358 to 374 the composition is skewed to acidic residues; that stretch reads DEAELLDDEAELSDDEA. Basic and acidic residues-rich tracts occupy residues 375 to 397, 407 to 453, and 461 to 491; these read ELSKDEAEQSSDEAEKSEDKAEK, DEAK…EFAK, and LKRDENRPLAKGLRESAAHLRDFPSEKKSKD.

Component of the acid-soluble organic matrix of the aragonitic skeleton (at protein level).

It localises to the secreted. The polypeptide is Aspartic and glutamic acid-rich protein (Acropora millepora (Staghorn coral)).